Here is a 179-residue protein sequence, read N- to C-terminus: Pyridoxal 5'-phosphate synthase subunit PdxT (179 aa).

48 to 50 (GES) contacts L-glutamine. Residue cysteine 79 is the Nucleophile of the active site. Residues arginine 101 and 127 to 128 (IR) contribute to the L-glutamine site. Catalysis depends on charge relay system residues histidine 163 and glutamate 165.

The protein belongs to the glutaminase PdxT/SNO family. In terms of assembly, in the presence of PdxS, forms a dodecamer of heterodimers. Only shows activity in the heterodimer.

The enzyme catalyses aldehydo-D-ribose 5-phosphate + D-glyceraldehyde 3-phosphate + L-glutamine = pyridoxal 5'-phosphate + L-glutamate + phosphate + 3 H2O + H(+). The catalysed reaction is L-glutamine + H2O = L-glutamate + NH4(+). The protein operates within cofactor biosynthesis; pyridoxal 5'-phosphate biosynthesis. Catalyzes the hydrolysis of glutamine to glutamate and ammonia as part of the biosynthesis of pyridoxal 5'-phosphate. The resulting ammonia molecule is channeled to the active site of PdxS. This is Pyridoxal 5'-phosphate synthase subunit PdxT from Francisella tularensis subsp. novicida (strain U112).